Consider the following 579-residue polypeptide: Transcription factor MTB2 (579 aa).

Residues 373–439 (GGMQIDFTNS…PLNHVEAERQ (67 aa)) form a disordered region. Over residues 382–392 (SRPVVSPVPTV) the composition is skewed to low complexity. 2 stretches are compositionally biased toward basic and acidic residues: residues 393 to 415 (ESEH…DERR) and 425 to 439 (NGRE…AERQ). The segment at 428-441 (EEPLNHVEAERQRR) is basic motif; degenerate. The 50-residue stretch at 428-477 (EEPLNHVEAERQRREKLNQRFYALRAVVPNISKMDKASLLGDAIAHITDM) folds into the bHLH domain. Residues 442 to 477 (EKLNQRFYALRAVVPNISKMDKASLLGDAIAHITDM) are helix-loop-helix motif.

It is found in the nucleus. In terms of biological role, transcription factor that negatively regulates jasmonate (JA) signaling. Negatively regulates JA-dependent response to wounding, JA-induced expression of defense genes, JA-dependent responses against herbivorous insects, and JA-dependent resistance against Botrytis cinerea infection. Plays a positive role in resistance against the bacterial pathogen Pseudomonas syringae pv tomato DC3000. The polypeptide is Transcription factor MTB2 (Solanum lycopersicum (Tomato)).